The sequence spans 202 residues: Glycerol-3-phosphate acyltransferase (202 aa).

5 helical membrane passes run 6–26 (LTLGMILSAYLAGSISSAVLV), 56–76 (SAALVLFFDMLKGALPAYIAF), 82–102 (SVSLGIIAIAACLGHIFPIFF), 118–138 (APIGPELALLLMGSWVLMVLI), and 141–161 (YSSLAAIVTALLAPFYTWYLD).

Belongs to the PlsY family. Probably interacts with PlsX.

Its subcellular location is the cell inner membrane. The catalysed reaction is an acyl phosphate + sn-glycerol 3-phosphate = a 1-acyl-sn-glycero-3-phosphate + phosphate. Its pathway is lipid metabolism; phospholipid metabolism. Catalyzes the transfer of an acyl group from acyl-phosphate (acyl-PO(4)) to glycerol-3-phosphate (G3P) to form lysophosphatidic acid (LPA). This enzyme utilizes acyl-phosphate as fatty acyl donor, but not acyl-CoA or acyl-ACP. The protein is Glycerol-3-phosphate acyltransferase of Shewanella woodyi (strain ATCC 51908 / MS32).